Here is a 145-residue protein sequence, read N- to C-terminus: NADH-quinone oxidoreductase subunit A (145 aa).

The next 3 membrane-spanning stretches (helical) occupy residues 14-34 (FAVFLLSALGLCVFMLTGGFL), 66-86 (FYLVAMFFVIFDVETLYLYAW), and 96-116 (VGFIEATIFILILLAGLVYLV).

This sequence belongs to the complex I subunit 3 family. As to quaternary structure, NDH-1 is composed of 13 different subunits. Subunits NuoA, H, J, K, L, M, N constitute the membrane sector of the complex.

It localises to the cell inner membrane. The catalysed reaction is a quinone + NADH + 5 H(+)(in) = a quinol + NAD(+) + 4 H(+)(out). Its function is as follows. NDH-1 shuttles electrons from NADH, via FMN and iron-sulfur (Fe-S) centers, to quinones in the respiratory chain. The immediate electron acceptor for the enzyme in this species is believed to be ubiquinone. Couples the redox reaction to proton translocation (for every two electrons transferred, four hydrogen ions are translocated across the cytoplasmic membrane), and thus conserves the redox energy in a proton gradient. The sequence is that of NADH-quinone oxidoreductase subunit A from Sodalis glossinidius (strain morsitans).